A 118-amino-acid polypeptide reads, in one-letter code: Non-specific lipid-transfer protein (118 aa).

An N-terminal signal peptide occupies residues 1 to 25 (MDCIRILWSVAVGLLLVSWRPTMFA). Cystine bridges form between C30–C76, C40–C53, C54–C98, and C74–C113.

Belongs to the plant LTP family.

Its function is as follows. Plant non-specific lipid-transfer proteins transfer phospholipids as well as galactolipids across membranes. May play a role in wax or cutin deposition in the cell walls of expanding epidermal cells and certain secretory tissues. The chain is Non-specific lipid-transfer protein from Ambrosia artemisiifolia (Common ragweed).